Consider the following 462-residue polypeptide: Sensor histidine kinase ZraS (462 aa).

Over 1-14 the chain is Cytoplasmic; the sequence is MNVMRLSKDSVAVG. The helical transmembrane segment at 15–35 threads the bilayer; the sequence is LSWLLTGLILLLVCLFSALIV. At 36–197 the chain is on the periplasmic side; it reads RDYGRENEAA…ADHARGLRNM (162 aa). Residues 198–218 form a helical membrane-spanning segment; the sequence is VIMLCAAGVVMAATVLAQFWF. Residues 219–462 lie on the Cytoplasmic side of the membrane; that stretch reads RRYQRSRKQL…VNGQQKDEQG (244 aa). Residues 247 to 455 enclose the Histidine kinase domain; the sequence is GVAHEIRNPL…LFTFYLPVNG (209 aa). Residue His250 is modified to Phosphohistidine; by autocatalysis.

In terms of processing, autophosphorylated.

The protein localises to the cell inner membrane. The catalysed reaction is ATP + protein L-histidine = ADP + protein N-phospho-L-histidine.. With respect to regulation, activity of the ZraS/ZraR two-component system is repressed by the zinc-bound form of ZraP, which probably interacts with the periplasmic region of ZraS. Its function is as follows. Part of the Zra signaling pathway, an envelope stress response (ESR) system composed of the periplasmic accessory protein ZraP, the histidine kinase ZraS and the transcriptional regulator ZraR. The ZraPSR system contributes to antibiotic resistance and is important for membrane integrity in the presence of membrane-targeting biocides. ZraS is a member of the two-component regulatory system ZraS/ZraR. Functions as a membrane-associated sensor kinase that phosphorylates ZraR in response to high concentrations of Zn(2+) or Pb(2+) in the medium. This Klebsiella oxytoca protein is Sensor histidine kinase ZraS (zraS).